The primary structure comprises 450 residues: Na(+)/H(+) antiporter NhaA 2 (450 aa).

The next 12 helical transmembrane spans lie at 43–63 (VGGAVLLVASAVALVWANSPW), 86–106 (LTLGTWAADGLLAVFFLVVGL), 124–144 (ALPMAAAVGGMVVPALIFVAV), 155–175 (GWAIPTATDIAFAVAVLAVIS), 185–205 (FLLTLAVVDDLLAVTVIAVFY), 208–228 (EINLTALGLSIVPLALFALCV), 234–254 (SWWLLLPLGVATWVLMHESGV), 258–278 (VAGVLLGFTVPVLRSVAAGGP), 299–319 (VAVPVFAFFAAGVAIGGVSGL), 326–346 (PITLGIILGLVVGKPVGIFLT), 364–384 (WIDVFGVALLAGIGFTVSLLI), and 398–418 (FVKVGVLTGSLVAALIAAVLL).

This sequence belongs to the NhaA Na(+)/H(+) (TC 2.A.33) antiporter family.

The protein localises to the cell membrane. It carries out the reaction Na(+)(in) + 2 H(+)(out) = Na(+)(out) + 2 H(+)(in). In terms of biological role, na(+)/H(+) antiporter that extrudes sodium in exchange for external protons. The polypeptide is Na(+)/H(+) antiporter NhaA 2 (Mycobacterium sp. (strain KMS)).